The sequence spans 165 residues: Nucleotide-binding protein PMN2A_1813 (165 aa).

It belongs to the YajQ family.

In terms of biological role, nucleotide-binding protein. The protein is Nucleotide-binding protein PMN2A_1813 of Prochlorococcus marinus (strain NATL2A).